The chain runs to 326 residues: Centriolar satellite-associated tubulin polyglutamylase complex regulator 1 (326 aa).

Residues 1 to 111 (MLSPERLALP…HCLLQLLCPD (111 aa)) form a required for interaction with PCM1 region. Residues 1-225 (MLSPERLALP…SCPPPALVKE (225 aa)) are required for interaction with TPGS1, LRRC49, and TTLL1.

The protein belongs to the CSTPP1 family. Interacts with PCM1. Interacts with TTLL1, TPGS1, TPGS2 and LRRC49; the interactions link CSTPP1 to the complex TPGC. Binds to alpha-tubulin.

Its subcellular location is the cytoplasm. The protein localises to the cytoskeleton. It localises to the microtubule organizing center. It is found in the centrosome. The protein resides in the centriolar satellite. Its function is as follows. Regulator of the tubulin polyglutamylase complex (TPGC) that controls cytoskeletal organization, nuclear shape, and cilium disassembly by balancing microtubule and actin assembly. Regulates the assembly and stability of the TPGC and thereby modulates polyglutamylation of the microtubule, which antagonizes MAP4 binding. In Bos taurus (Bovine), this protein is Centriolar satellite-associated tubulin polyglutamylase complex regulator 1 (CSTPP1).